The following is an 833-amino-acid chain: MSFYNHKEIEPKWQGYWAEHHTFKTGTDASKPKFYALDMFPYPSGAGLHVGHPEGYTATDILSRYKRAQGYNVLHPMGWDAFGLPAEQYAMDTGNDPAEFTAENIANFKRQINALGFSYDWDREVNTTDPNYYKWTQWIFTKLYEKGLAYEAEVPVNWVEELGTAIANEEVLPDGTSERGGYPVVRKPMRQWMLKITAYAERLLNDLDELDWPESIKDMQRNWIGKSTGANVTFKVKGTDKEFTVFTTRPDTLFGATFTVLAPEHELVDAITSSEQAEAVANYKHQASLKSDLARTDLAKEKTGVWTGAYAINPVNGKEIPIWIADYVLASYGTGAVMAVPAHDQRDWEFAKQFDLPIVEVLEGGNVAEAAYTEDGLHVNSDFLDGLNKEEAIAKIVAWLEEKGCGQEKVTYRLRDWLFSRQRYWGEPIPIIHWEDGTSTAVPESELPLVLPVTKDIRPSGTGESPLANLTDWLEVTRADGVKGRRETNTMPQWAGSSWYYLRYIDPHNTEKLADEDLLKQWLPVDIYVGGAEHAVLHLLYARFWHKFLYDLGVVPTKEPFQKLFNQGMILGTSYRDHRGALVTTDKVEKRDGSFFHVETGEELEQAPAKMSKSLKNVVNPDDVVEQYGADTLRVYEMFMGPLDASIAWSEEGLEGSRKFLDRVYRLITSKEILAENNGALDKAYNETVKAVTEQIESLKFNTAIAQLMVFVNAANKEDKLYVDYAKGFIQLIAPFAPHLAEELWQTVAETGESISYVAWPTWDESKLVEDEIEIVVQIKGKVRAKLMVAKDLSREELQEIALADEKVKAEIDGKEIVKVISVPNKLVNIVVK.

Residues 41 to 52 carry the 'HIGH' region motif; the sequence is PYPSGAGLHVGH. Positions 610 to 614 match the 'KMSKS' region motif; the sequence is KMSKS. Lys613 contacts ATP.

Belongs to the class-I aminoacyl-tRNA synthetase family.

It localises to the cytoplasm. The catalysed reaction is tRNA(Leu) + L-leucine + ATP = L-leucyl-tRNA(Leu) + AMP + diphosphate. This chain is Leucine--tRNA ligase, found in Streptococcus pneumoniae serotype 19F (strain G54).